A 349-amino-acid polypeptide reads, in one-letter code: UDP-3-O-acylglucosamine N-acyltransferase 1 (349 aa).

H241 serves as the catalytic Proton acceptor.

It belongs to the transferase hexapeptide repeat family. LpxD subfamily. In terms of assembly, homotrimer.

The enzyme catalyses a UDP-3-O-[(3R)-3-hydroxyacyl]-alpha-D-glucosamine + a (3R)-hydroxyacyl-[ACP] = a UDP-2-N,3-O-bis[(3R)-3-hydroxyacyl]-alpha-D-glucosamine + holo-[ACP] + H(+). The protein operates within bacterial outer membrane biogenesis; LPS lipid A biosynthesis. Its function is as follows. Catalyzes the N-acylation of UDP-3-O-acylglucosamine using 3-hydroxyacyl-ACP as the acyl donor. Is involved in the biosynthesis of lipid A, a phosphorylated glycolipid that anchors the lipopolysaccharide to the outer membrane of the cell. The protein is UDP-3-O-acylglucosamine N-acyltransferase 1 of Gloeobacter violaceus (strain ATCC 29082 / PCC 7421).